A 790-amino-acid chain; its full sequence is LPS-assembly protein LptD (790 aa).

Positions 1–20 (MRMLRWLILSAFSVAGAVQA) are cleaved as a signal peptide.

It belongs to the LptD family. In terms of assembly, component of the lipopolysaccharide transport and assembly complex. Interacts with LptE and LptA.

The protein localises to the cell outer membrane. Together with LptE, is involved in the assembly of lipopolysaccharide (LPS) at the surface of the outer membrane. The polypeptide is LPS-assembly protein LptD (Bordetella parapertussis (strain 12822 / ATCC BAA-587 / NCTC 13253)).